Reading from the N-terminus, the 359-residue chain is Probable dual-specificity RNA methyltransferase RlmN (359 aa).

Glutamate 100 acts as the Proton acceptor in catalysis. A Radical SAM core domain is found at threonine 106–aspartate 340. A disulfide bond links cysteine 113 and cysteine 345. Cysteine 120, cysteine 124, and cysteine 127 together coordinate [4Fe-4S] cluster. Residues glycine 167–glutamate 168, serine 197, serine 226–histidine 228, and asparagine 302 contribute to the S-adenosyl-L-methionine site. The active-site S-methylcysteine intermediate is the cysteine 345.

Belongs to the radical SAM superfamily. RlmN family. Requires [4Fe-4S] cluster as cofactor.

The protein resides in the cytoplasm. It catalyses the reaction adenosine(2503) in 23S rRNA + 2 reduced [2Fe-2S]-[ferredoxin] + 2 S-adenosyl-L-methionine = 2-methyladenosine(2503) in 23S rRNA + 5'-deoxyadenosine + L-methionine + 2 oxidized [2Fe-2S]-[ferredoxin] + S-adenosyl-L-homocysteine. The catalysed reaction is adenosine(37) in tRNA + 2 reduced [2Fe-2S]-[ferredoxin] + 2 S-adenosyl-L-methionine = 2-methyladenosine(37) in tRNA + 5'-deoxyadenosine + L-methionine + 2 oxidized [2Fe-2S]-[ferredoxin] + S-adenosyl-L-homocysteine. Its function is as follows. Specifically methylates position 2 of adenine 2503 in 23S rRNA and position 2 of adenine 37 in tRNAs. This chain is Probable dual-specificity RNA methyltransferase RlmN, found in Prochlorococcus marinus (strain NATL1A).